Reading from the N-terminus, the 352-residue chain is NAD(P)H pyrophosphatase NUDT13, mitochondrial (352 aa).

The N-terminal 20 residues, 1 to 20 (MSLYCGIACRRKFFWCYRLL), are a transit peptide targeting the mitochondrion. The region spanning 196–323 (PQMAPVAITL…PYTQQQNGTF (128 aa)) is the Nudix hydrolase domain. Residues 216 to 240 (RQSSFPKGMYSALAGFCDIGESVEE) carry the Nudix box motif.

This sequence belongs to the Nudix hydrolase family. It depends on Mg(2+) as a cofactor. Mn(2+) serves as cofactor. In terms of tissue distribution, highly expressed in metastasis-suppressed chromosome 6 melanoma hybrids.

It is found in the mitochondrion. The enzyme catalyses NADH + H2O = reduced beta-nicotinamide D-ribonucleotide + AMP + 2 H(+). It catalyses the reaction NAD(+) + H2O = beta-nicotinamide D-ribonucleotide + AMP + 2 H(+). It carries out the reaction NADPH + H2O = reduced beta-nicotinamide D-ribonucleotide + adenosine 2',5'-bisphosphate + 2 H(+). Its function is as follows. NAD(P)H pyrophosphatase that hydrolyzes NADH into NMNH and AMP, and NADPH into NMNH and 2',5'-ADP. Has a marked preference for the reduced pyridine nucleotides. Does not show activity toward NAD-capped RNAs; the NAD-cap is an atypical cap present at the 5'-end of some RNAs. The sequence is that of NAD(P)H pyrophosphatase NUDT13, mitochondrial from Homo sapiens (Human).